Here is a 271-residue protein sequence, read N- to C-terminus: Pyrroline-5-carboxylate reductase (271 aa).

The protein belongs to the pyrroline-5-carboxylate reductase family.

It localises to the cytoplasm. It catalyses the reaction L-proline + NADP(+) = (S)-1-pyrroline-5-carboxylate + NADPH + 2 H(+). The enzyme catalyses L-proline + NAD(+) = (S)-1-pyrroline-5-carboxylate + NADH + 2 H(+). Its pathway is amino-acid biosynthesis; L-proline biosynthesis; L-proline from L-glutamate 5-semialdehyde: step 1/1. Its function is as follows. Catalyzes the reduction of 1-pyrroline-5-carboxylate (PCA) to L-proline. The polypeptide is Pyrroline-5-carboxylate reductase (Staphylococcus epidermidis (strain ATCC 35984 / DSM 28319 / BCRC 17069 / CCUG 31568 / BM 3577 / RP62A)).